The primary structure comprises 192 residues: MYVVFEGIDCVGKSTQISLLKEIYKDAIFTLEPGGTELGKHLREILLNKTHPISKRAELLLFLADRAQHFEEILKTNQNKLIISDRSFISGMAYAKDFENDLLFTLNSFALEDFFPQKIIFLKGDENLIQERLSQKELDSIEKRGIEYFLSVQDKLKKVLHFLKEKISIEILTLDAKESKEKLHQQIKEFLQ.

7–14 (GIDCVGKS) provides a ligand contact to ATP.

It belongs to the thymidylate kinase family.

The enzyme catalyses dTMP + ATP = dTDP + ADP. In terms of biological role, phosphorylation of dTMP to form dTDP in both de novo and salvage pathways of dTTP synthesis. The protein is Thymidylate kinase of Campylobacter jejuni subsp. doylei (strain ATCC BAA-1458 / RM4099 / 269.97).